We begin with the raw amino-acid sequence, 692 residues long: E3 ubiquitin-protein ligase MARCHF7 (692 aa).

Residue Met-1 is modified to N-acetylmethionine. Disordered stretches follow at residues Met-1–Ser-165, Ser-201–Thr-280, Phe-296–Glu-343, Leu-360–Arg-425, Ser-440–Gly-474, and Ser-512–Leu-532. Positions Tyr-37–Ser-48 are enriched in basic and acidic residues. Composition is skewed to polar residues over residues Pro-61–Gln-83 and Ser-95–Val-132. Residues Leu-140–Ser-153 are compositionally biased toward basic and acidic residues. Over residues Ser-201–Pro-214 the composition is skewed to polar residues. The segment covering Ser-215–Ser-233 has biased composition (low complexity). The span at Ser-235 to Ser-272 shows a compositional bias: polar residues. The segment covering Phe-296 to Ser-305 has biased composition (low complexity). Residues Leu-306 to Val-336 are compositionally biased toward polar residues. Ser-318 and Ser-389 each carry phosphoserine. The span at Ala-450–Ser-462 shows a compositional bias: low complexity. The span at Gly-516 to Leu-532 shows a compositional bias: basic and acidic residues. Residues Asp-545–Asn-615 form an RING-CH-type zinc finger. Residues Cys-553, Cys-556, Cys-571, Cys-573, His-581, Cys-584, Cys-605, and Cys-608 each contribute to the Zn(2+) site. Thr-687 bears the Phosphothreonine mark. Phosphoserine is present on Ser-688.

It localises to the cytoplasm. It carries out the reaction S-ubiquitinyl-[E2 ubiquitin-conjugating enzyme]-L-cysteine + [acceptor protein]-L-lysine = [E2 ubiquitin-conjugating enzyme]-L-cysteine + N(6)-ubiquitinyl-[acceptor protein]-L-lysine.. The protein operates within protein modification; protein ubiquitination. E3 ubiquitin-protein ligase which may specifically enhance the E2 activity of HIP2. E3 ubiquitin ligases accept ubiquitin from an E2 ubiquitin-conjugating enzyme in the form of a thioester and then directly transfer the ubiquitin to targeted substrates. May be involved in T-cell proliferation by regulating LIF secretion. May play a role in lysosome homeostasis. Promotes 'Lys-6', 'Lys-11' and 'Lys-63'-linked mixed polyubiquitination on ATG14 leading to the inhibition of autophagy by impairing the interaction between ATG14 and STX7. Participates in the dopamine-mediated negative regulation of the NLRP3 inflammasome by promoting its uibiquitination and subsequent degradation. The chain is E3 ubiquitin-protein ligase MARCHF7 (Marchf7) from Rattus norvegicus (Rat).